We begin with the raw amino-acid sequence, 182 residues long: Large ribosomal subunit protein uL10 (182 aa).

This sequence belongs to the universal ribosomal protein uL10 family. As to quaternary structure, part of the ribosomal stalk of the 50S ribosomal subunit. The N-terminus interacts with L11 and the large rRNA to form the base of the stalk. The C-terminus forms an elongated spine to which L12 dimers bind in a sequential fashion forming a multimeric L10(L12)X complex.

Functionally, forms part of the ribosomal stalk, playing a central role in the interaction of the ribosome with GTP-bound translation factors. This Janthinobacterium sp. (strain Marseille) (Minibacterium massiliensis) protein is Large ribosomal subunit protein uL10.